Reading from the N-terminus, the 152-residue chain is Orientotoxin-1 (152 aa).

As to expression, expressed by the venom gland.

The protein localises to the secreted. It catalyses the reaction a 1-acyl-sn-glycero-3-phosphocholine + H2O = sn-glycerol 3-phosphocholine + a fatty acid + H(+). In terms of biological role, neurotoxin of presynaptic effect which degrades lysophospholipids. The polypeptide is Orientotoxin-1 (Vespa orientalis (Oriental hornet)).